The primary structure comprises 350 residues: Calcium uniporter protein, mitochondrial (350 aa).

Residues 1-49 (MAAAAGRSLLLLLCSRGGGGGAGGCGALTAGCFPGLGVSRHRPHQQHRT) constitute a mitochondrion transit peptide. The Mitochondrial matrix segment spans residues 50-232 (AHQRPASWQS…ISRKAEKRTT (183 aa)). Phosphoserine; by CaMK2 is present on residues Ser56 and Ser91. The interval 74-164 (VTVVYQNGLP…LTYHVRPPKR (91 aa)) is N-terminal MCU domain. Cys96 carries the post-translational modification S-glutathionyl cysteine. Residues 191–220 (IEQHQLNKERELVERLEDLKQQLAPLEKVR) are a coiled coil. The helical transmembrane segment at 233–256 (LVLWGGLAYMATQFGILARLTWWE) threads the bilayer. The Mitochondrial intermembrane portion of the chain corresponds to 257–264 (YSWDIMEP). The Selectivity filter signature appears at 259 to 267 (WDIMEPVTY). Glu263 contributes to the Ca(2+) binding site. A helical membrane pass occupies residues 265 to 282 (VTYFITYGSAMAMYAYFV). The Mitochondrial matrix portion of the chain corresponds to 283 to 350 (MTRQEYVYPE…LPLRQIGEKE (68 aa)). The juxtamembrane helix stretch occupies residues 284–289 (TRQEYV). Residues 310-338 (RFDLEKYNQLKDAIAQAEMDLKRLRDPLQ) adopt a coiled-coil conformation. Lys331 is modified (N6-acetyllysine).

It belongs to the MCU (TC 1.A.77) family. Homotetramer. Component of the uniplex complex, composed of MCU, EMRE/SMDT1, MICU1 and MICU2 (or MICU3) in a 4:4:1:1 stoichiometry. Interacts with CCDC109B/MCUB; this inhibits channel activity. Interacts with MCUR1. Interactions with MICU1 and MCUR1 are mutually exclusive. Interacts with SLC25A23. Post-translationally, phosphorylation by CaMK2 in heart leads to increased MCU current. The regulation of MCU by CaMK2 is however subject to discussion: another group was unable to reproduce these results. Phosphorylated on tyrosines by PTK2B/PYK2, promoting oligomerization. Glutathionylation at Cys-96 in response to reactive oxygen species (ROS) promotes MCU higher-order assembly, leading to constitutive activation of the MCU channel and mitochondrial calcium overload. In terms of processing, undergoes proteolytic degradation by SPG7. In terms of tissue distribution, detected in heart muscle (at protein level). Expressed in skeletal muscle, heart, kidney, liver, brain, lung, white fat and spleen.

The protein resides in the mitochondrion inner membrane. It catalyses the reaction Ca(2+)(in) = Ca(2+)(out). MCU channel activity is regulated by the heterodimer composed of MICU1 and either MICU2 or MICU3, which act as calcium-sensors. At low calcium levels, MICU1 occludes the pore of the MCU channel, preventing mitochondrial calcium uptake. At higher calcium levels, calcium-binding to MICU1 and MICU2 (or MICU3) induces a conformational change that weakens MCU-MICU1 interactions and moves the MICU1-MICU2 heterodimer away from the pore, allowing calcium permeation through the channel. MCU channel activity is gated by EMRE/SMDT1 via the juxtamembrane helix loop. Inhibited by ruthenium red or its derivative Ru360. Its function is as follows. Channel-forming and calcium-conducting subunit of the mitochondrial inner membrane calcium uniporter complex (uniplex), which mediates calcium uptake into the mitochondrial matrix. MCU channel activity is regulated by the calcium-sensor subunits of the uniplex MICU1 and MICU2 (or MICU3). Mitochondrial calcium homeostasis plays key roles in cellular physiology and regulates ATP production, cytoplasmic calcium signals and activation of cell death pathways. Involved in buffering the amplitude of systolic calcium rises in cardiomyocytes. While dispensable for baseline homeostatic cardiac function, acts as a key regulator of short-term mitochondrial calcium loading underlying a 'fight-or-flight' response during acute stress: acts by mediating a rapid increase of mitochondrial calcium in pacemaker cells. Participates in mitochondrial permeability transition during ischemia-reperfusion injury. Mitochondrial calcium uptake in skeletal muscle cells is involved in muscle size in adults. Regulates synaptic vesicle endocytosis kinetics in central nerve terminal. Regulates glucose-dependent insulin secretion in pancreatic beta-cells by regulating mitochondrial calcium uptake. Involved in antigen processing and presentation. This is Calcium uniporter protein, mitochondrial from Mus musculus (Mouse).